Consider the following 412-residue polypeptide: Elongation factor 1-gamma 2 (412 aa).

N-acetylserine is present on S2. Positions 2-77 constitute a GST N-terminal domain; that stretch reads SQGTLYINRS…YLANQVADEK (76 aa). In terms of domain architecture, GST C-terminal spans 86–217; it reads DVIEKSQILR…AEKALTYTPP (132 aa). Residues 216-253 form a disordered region; the sequence is PPKKQKAEKPKAEKSKAEKKKDEAKPADDAAPAKKPKH. Positions 220–247 are enriched in basic and acidic residues; that stretch reads QKAEKPKAEKSKAEKKKDEAKPADDAAP. The 162-residue stretch at 251 to 412 folds into the EF-1-gamma C-terminal domain; sequence PKHPLEALGK…KEIVDGKVLK (162 aa).

As to quaternary structure, the eukaryotic elongation factor 1 complex (eEF1) is probably a heterohexamer. Two trimeric complexes, each composed of eEF1A (TEF1 or TEF2), eEF1Balpha (EFB1) and eEF1Bgamma (CAM1 or TEF4), are probably dimerized via the eF1Bgamma subunits. The eEF1B subcomplex with the GEF activity is formed of eEF1Balpha and eEF1Bgamma. TEF4 interacts with EFB1.

The protein resides in the cytoplasm. The protein operates within protein biosynthesis; polypeptide chain elongation. Functionally, subunit of the eukaryotic elongation factor 1 complex (eEF1). Probably plays a role in anchoring the complex to other cellular components. The sequence is that of Elongation factor 1-gamma 2 (TEF4) from Saccharomyces cerevisiae (strain ATCC 204508 / S288c) (Baker's yeast).